The chain runs to 257 residues: MPGFTCCVPGCYNNSHRDRDLRFYTFPKDPTQREIWLKNISRAGVSGCFSTFQPTTGHRVCSVHFPGGRKTYTIRVPTLFPLRGVNERRSRRGRSRKVSAVVPIITSVVSTANETAPLEEDEEEGDIENTTVVQIGQNGQYIAPVDLTSSGDGSCITAVVSGGEESAVHESCSVADFALCGADHSYSLTTGTTSTELLRKLNEQRDIIALMEIKMKEMKNTIRQLRVTEARLQDELRQREQERERLICANTIIKRKL.

The THAP-type zinc-finger motif lies at 6–64 (CCVPGCYNNSHRDRDLRFYTFPKDPTQREIWLKNISRAGVSGCFSTFQPTTGHRVCSVH). A coiled-coil region spans residues 196 to 251 (ELLRKLNEQRDIIALMEIKMKEMKNTIRQLRVTEARLQDELRQREQERERLICANT).

This sequence belongs to the THAP11 family.

The protein resides in the nucleus. Its subcellular location is the cytoplasm. Its function is as follows. Transcription factor, which has both transcriptional activation and repression activities. Binds numerous promoters of genes and therefore can be involved in many processes. Also modulates chromatin accessibility. Required for normal brain development and neural precursor differentiation. This is THAP domain-containing protein 11 (thap11) from Danio rerio (Zebrafish).